Consider the following 96-residue polypeptide: UPF0235 protein YE3436 (96 aa).

It belongs to the UPF0235 family.

The protein is UPF0235 protein YE3436 of Yersinia enterocolitica serotype O:8 / biotype 1B (strain NCTC 13174 / 8081).